The primary structure comprises 295 residues: GATA transcription factor 18 (295 aa).

Residues 148 to 202 form a GATA-type zinc finger; it reads SLLARRCANCDTTSTPLWRNGPRGPKSLCNACGIRFKKEERRTTAATGNTVVGAA.

The protein belongs to the type IV zinc-finger family. Class B subfamily. As to quaternary structure, homodimer. Forms heterodimers with GATA19, GATA22 and GATA21. Interacts with JAG. Binds to AGO10/PNH. Expressed in vegetative and inflorescence shoot apical meristems (SAMs), axillary (SAMs), floral meristems, developing ovules and stamens, vascular tissues, and in the embryo.

It is found in the nucleus. Functionally, transcriptional factor that specifically binds 5'-GATA-3' or 5'-GAT-3' motifs within gene promoters (including its own promoter and GATA21 promoter), thus regulating the expression of genes mostly involved in hormone responses and floral organ specification (including genes regulating hormones responses). Regulates both flower and shoot apical meristem (SAM) development, especially for establishing organ boundaries in shoots and flowers, probably by controlling the number and position of WUS-expressing cells. Coregulates, with AGO10/PNH, the shoot apical meristem (SAM) organization. Regulates floral organ development via the promotion of JAG and NPR5/BOP2 expression. Modulates cytokinin homeostasis in organ boundaries by regulating CKX3 expression. Involved in cell proliferation and differentiation. Required to position the inductive proembryo boundary via the regulation of gene expression and for early embryonic development. Together with GIF1/AN3, mediates cotyledon identity by preventing ectopic root formation through the repression of PLT1 expression. The protein is GATA transcription factor 18 of Arabidopsis thaliana (Mouse-ear cress).